The sequence spans 449 residues: Tubulin beta chain (449 aa).

Residues Gln11, Glu71, Ser140, Gly144, Thr145, Gly146, Asn206, and Asn228 each contribute to the GTP site. Position 71 (Glu71) interacts with Mg(2+).

The protein belongs to the tubulin family. Dimer of alpha and beta chains. A typical microtubule is a hollow water-filled tube with an outer diameter of 25 nm and an inner diameter of 15 nM. Alpha-beta heterodimers associate head-to-tail to form protofilaments running lengthwise along the microtubule wall with the beta-tubulin subunit facing the microtubule plus end conferring a structural polarity. Microtubules usually have 13 protofilaments but different protofilament numbers can be found in some organisms and specialized cells. It depends on Mg(2+) as a cofactor.

The protein resides in the cytoplasm. Its subcellular location is the cytoskeleton. Tubulin is the major constituent of microtubules, a cylinder consisting of laterally associated linear protofilaments composed of alpha- and beta-tubulin heterodimers. Microtubules grow by the addition of GTP-tubulin dimers to the microtubule end, where a stabilizing cap forms. Below the cap, tubulin dimers are in GDP-bound state, owing to GTPase activity of alpha-tubulin. The polypeptide is Tubulin beta chain (TUBB) (Cicer arietinum (Chickpea)).